The following is a 187-amino-acid chain: UPF0301 protein PC1_3712 (187 aa).

The protein belongs to the UPF0301 (AlgH) family.

This Pectobacterium carotovorum subsp. carotovorum (strain PC1) protein is UPF0301 protein PC1_3712.